We begin with the raw amino-acid sequence, 389 residues long: Probable dual-specificity RNA methyltransferase RlmN (389 aa).

The tract at residues 1–23 (MTTQHPDTPETGITPGGTSGAFR) is disordered. E127 acts as the Proton acceptor in catalysis. The region spanning 133-376 (YPTRTTLCIS…ATLRDTRGQD (244 aa)) is the Radical SAM core domain. C140 and C381 are joined by a disulfide. C147, C151, and C154 together coordinate [4Fe-4S] cluster. S-adenosyl-L-methionine contacts are provided by residues 202–203 (GE), S236, 259–261 (SLH), and N338. C381 functions as the S-methylcysteine intermediate in the catalytic mechanism.

This sequence belongs to the radical SAM superfamily. RlmN family. The cofactor is [4Fe-4S] cluster.

The protein resides in the cytoplasm. It carries out the reaction adenosine(2503) in 23S rRNA + 2 reduced [2Fe-2S]-[ferredoxin] + 2 S-adenosyl-L-methionine = 2-methyladenosine(2503) in 23S rRNA + 5'-deoxyadenosine + L-methionine + 2 oxidized [2Fe-2S]-[ferredoxin] + S-adenosyl-L-homocysteine. It catalyses the reaction adenosine(37) in tRNA + 2 reduced [2Fe-2S]-[ferredoxin] + 2 S-adenosyl-L-methionine = 2-methyladenosine(37) in tRNA + 5'-deoxyadenosine + L-methionine + 2 oxidized [2Fe-2S]-[ferredoxin] + S-adenosyl-L-homocysteine. Specifically methylates position 2 of adenine 2503 in 23S rRNA and position 2 of adenine 37 in tRNAs. The sequence is that of Probable dual-specificity RNA methyltransferase RlmN from Bifidobacterium longum (strain NCC 2705).